Consider the following 804-residue polypeptide: Ion-translocating oxidoreductase complex subunit C (804 aa).

4Fe-4S ferredoxin-type domains are found at residues 366-397 and 407-436; these read SEMG…QQLY and KARA…VQYY. The [4Fe-4S] cluster site is built by C377, C380, C383, C387, C416, C419, C422, and C426. Disordered stretches follow at residues 466–532 and 567–804; these read RLER…EVRV and KAAQ…MQED. Composition is skewed to low complexity over residues 484-495, 567-582, 592-619, 629-660, 668-693, 706-731, and 744-769; these read SVASSDAGAIAA, KAAQ…APQQ, AAVA…EAPQ, KAAV…QQSA, and AAVA…ATEA.

The protein belongs to the 4Fe4S bacterial-type ferredoxin family. RnfC subfamily. As to quaternary structure, the complex is composed of six subunits: RnfA, RnfB, RnfC, RnfD, RnfE and RnfG. The cofactor is [4Fe-4S] cluster.

The protein localises to the cell inner membrane. Its function is as follows. Part of a membrane-bound complex that couples electron transfer with translocation of ions across the membrane. This chain is Ion-translocating oxidoreductase complex subunit C, found in Erwinia tasmaniensis (strain DSM 17950 / CFBP 7177 / CIP 109463 / NCPPB 4357 / Et1/99).